The following is a 214-amino-acid chain: Adenylate kinase (214 aa).

ATP is bound at residue 10-15 (GAGKGT). Positions 30–59 (STGDMLRAAIKAGTELGLKAKAVMDAGQLV) are NMP. AMP contacts are provided by residues Thr31, Arg36, 57–59 (QLV), 85–88 (GFPR), and Gln92. Residues 122 to 159 (GRRVHSGSGRTYHVVFNPPKVEGKDDVTGEDLVIRADD) are LID. ATP is bound by residues Arg123 and 132 to 133 (TY). The AMP site is built by Arg156 and Arg167. Residue Gln200 participates in ATP binding.

Belongs to the adenylate kinase family. As to quaternary structure, monomer.

The protein localises to the cytoplasm. The enzyme catalyses AMP + ATP = 2 ADP. Its pathway is purine metabolism; AMP biosynthesis via salvage pathway; AMP from ADP: step 1/1. Its function is as follows. Catalyzes the reversible transfer of the terminal phosphate group between ATP and AMP. Plays an important role in cellular energy homeostasis and in adenine nucleotide metabolism. The sequence is that of Adenylate kinase from Aeromonas hydrophila subsp. hydrophila (strain ATCC 7966 / DSM 30187 / BCRC 13018 / CCUG 14551 / JCM 1027 / KCTC 2358 / NCIMB 9240 / NCTC 8049).